The chain runs to 142 residues: UPF0102 protein Synpcc7942_0312 (142 aa).

The protein belongs to the UPF0102 family.

The sequence is that of UPF0102 protein Synpcc7942_0312 from Synechococcus elongatus (strain ATCC 33912 / PCC 7942 / FACHB-805) (Anacystis nidulans R2).